A 282-amino-acid polypeptide reads, in one-letter code: U1 small nuclear ribonucleoprotein A (282 aa).

Position 2 is an N-acetylalanine (Ala2). The RRM 1 domain occupies 10 to 89 (HTIYINNLNE…KPMRIQYAKT (80 aa)). Position 60 is an N6-acetyllysine (Lys60). Positions 100–132 (TFVERDRKREKRKPKSQETPATKKAVQGGGATP) are disordered. Thr131 carries the phosphothreonine modification. Arg152 bears the Omega-N-methylarginine mark. Residues 208-282 (HILFLTNLPE…NAMKISFAKK (75 aa)) enclose the RRM 2 domain.

Belongs to the RRM U1 A/B'' family. In terms of assembly, U1 snRNP is composed of the 7 core Sm proteins SNRPB, SNRPD1, SNRPD2, SNRPD3, SNRPE, SNRPF and SNRPG that assemble in a heptameric protein ring on the Sm site of the small nuclear RNA to form the core snRNP, and at least three U1 snRNP-specific proteins SNRNP70/U1-70K, SNRPA/U1-A and SNRPC/U1-C. Interacts with SFPQ; component of a snRNP-free complex with SFPQ. Interacts with IVNS1ABP (via BACK domain); the interaction is indirect.

Its subcellular location is the nucleus. Component of the spliceosomal U1 snRNP, which is essential for recognition of the pre-mRNA 5' splice-site and the subsequent assembly of the spliceosome. U1 snRNP is the first snRNP to interact with pre-mRNA. This interaction is required for the subsequent binding of U2 snRNP and the U4/U6/U5 tri-snRNP. SNRPA binds stem loop II of U1 snRNA. In a snRNP-free form (SF-A) may be involved in coupled pre-mRNA splicing and polyadenylation process. May bind preferentially to the 5'-UGCAC-3' motif on RNAs. The polypeptide is U1 small nuclear ribonucleoprotein A (SNRPA) (Homo sapiens (Human)).